A 449-amino-acid polypeptide reads, in one-letter code: Glucose-6-phosphate isomerase (449 aa).

Residue Glu291 is the Proton donor of the active site. Catalysis depends on residues His312 and Lys426.

It belongs to the GPI family.

It localises to the cytoplasm. It carries out the reaction alpha-D-glucose 6-phosphate = beta-D-fructose 6-phosphate. The protein operates within carbohydrate biosynthesis; gluconeogenesis. Its pathway is carbohydrate degradation; glycolysis; D-glyceraldehyde 3-phosphate and glycerone phosphate from D-glucose: step 2/4. In terms of biological role, catalyzes the reversible isomerization of glucose-6-phosphate to fructose-6-phosphate. The sequence is that of Glucose-6-phosphate isomerase from Clostridium botulinum (strain Eklund 17B / Type B).